The primary structure comprises 541 residues: MFSWMGRQAGGRERAGGADAVQTVTGGLRSLYLRKVLPLEEAYRFHEFHSPALEDADFENKPMILLVGQYSTGKTTFIRYLLEQDFPGMRIGPEPTTDSFIAVMYGETEGSTPGNALVVDPKKPFRKLSRFGNAFLNRFMCSQLPNQVLKSISVIDSPGILSGEKQRISRGYDFCQVLQWFAERVDRIILLFDAHKLDISDEFSEAIKAFRGQDDKIRVVLNKADQVDTQQLMRVYGALMWSLGKVINTPEVLRVYIGSFWAQPLQNTDNRRLFEAEAQDLFRDIQSLPQKAAVRKLNDLIKRARLAKVHAYIISYLKKEMPSVFGKENKKRELISRLPEIYIQLQREYQISAGDFPEVKAMQEQLENYDFTKFHSLKPKLIEAVDNMLSNKISPLMNLISQEETSTPTQLVQGGAFDGTTEGPFNQGYGEGAKEGADEEEWVVAKDKPVYDELFYTLSPINGKISGVNAKKEMVTSKLPNSVLGKIWKLADCDCDGMLDEEEFALAKHLIKIKLDGYELPSSLPPHLVPPSHRKSLPKAD.

M1 bears the N-acetylmethionine mark. Positions 58-289 (FENKPMILLV…DLFRDIQSLP (232 aa)) constitute a Dynamin-type G domain. Positions 68 to 75 (GQYSTGKT) are G1 motif. 68–75 (GQYSTGKT) contributes to the ATP binding site. The segment at 94 to 95 (EP) is G2 motif. The interval 156-159 (DSPG) is G3 motif. At S162 the chain carries Phosphoserine. The interval 222–225 (NKAD) is G4 motif. Position 223 (K223) interacts with ATP. Position 246 (V246) is a region of interest, G5 motif. W261 contributes to the ATP binding site. One can recognise an EH domain in the interval 447-535 (DKPVYDELFY…PHLVPPSHRK (89 aa)). At Y451 the chain carries Phosphotyrosine. Position 459 is a phosphoserine (S459). In terms of domain architecture, EF-hand spans 479-514 (LPNSVLGKIWKLADCDCDGMLDEEEFALAKHLIKIK). Positions 492, 494, 496, 498, and 503 each coordinate Ca(2+).

The protein belongs to the TRAFAC class dynamin-like GTPase superfamily. Dynamin/Fzo/YdjA family. EHD subfamily. As to quaternary structure, homooligomer, and heterooligomer with EHD1, EHD2 and EHD3. Forms a complex with EHD4 and MICALL1; the complex controls CDH5 trafficking and coordinates angiogenesis. As to expression, highly expressed in pancreas and heart.

It is found in the early endosome membrane. It localises to the recycling endosome membrane. Its subcellular location is the cell membrane. The protein localises to the cell junction. The protein resides in the adherens junction. Functionally, ATP- and membrane-binding protein that probably controls membrane reorganization/tubulation upon ATP hydrolysis. Plays a role in early endosomal transport. During sprouting angiogenesis, in complex with PACSIN2 and MICALL1, forms recycling endosome-like tubular structure at asymmetric adherens junctions to control CDH5 trafficking. This is EH domain-containing protein 4 from Homo sapiens (Human).